Here is an 833-residue protein sequence, read N- to C-terminus: DNA gyrase subunit A (833 aa).

Residues 34–500 form the Topo IIA-type catalytic domain; that stretch reads LPDVRDGLKP…AGDVRDIEDI (467 aa). Residue Tyr-122 is the O-(5'-phospho-DNA)-tyrosine intermediate of the active site. A GyrA-box motif is present at residues 527-533; the sequence is QKRGGQG.

Belongs to the type II topoisomerase GyrA/ParC subunit family. In terms of assembly, heterotetramer, composed of two GyrA and two GyrB chains. In the heterotetramer, GyrA contains the active site tyrosine that forms a transient covalent intermediate with DNA, while GyrB binds cofactors and catalyzes ATP hydrolysis.

The protein resides in the cytoplasm. The enzyme catalyses ATP-dependent breakage, passage and rejoining of double-stranded DNA.. In terms of biological role, a type II topoisomerase that negatively supercoils closed circular double-stranded (ds) DNA in an ATP-dependent manner to modulate DNA topology and maintain chromosomes in an underwound state. Negative supercoiling favors strand separation, and DNA replication, transcription, recombination and repair, all of which involve strand separation. Also able to catalyze the interconversion of other topological isomers of dsDNA rings, including catenanes and knotted rings. Type II topoisomerases break and join 2 DNA strands simultaneously in an ATP-dependent manner. In Chlamydia muridarum (strain MoPn / Nigg), this protein is DNA gyrase subunit A.